Here is a 111-residue protein sequence, read N- to C-terminus: uncharacterized protein (111 aa).

Residues 1–85 (MTGLMKAFQK…TSSREDEQKL (85 aa)) are disordered. The segment covering 11–23 (LSPTKRQYAEITQ) has biased composition (polar residues). The span at 24–42 (SNSSISSSSSGSKYNDSSS) shows a compositional bias: low complexity. Positions 56–77 (ARASTSTQAQKPASSQQKGGTS) are enriched in polar residues.

This is an uncharacterized protein from Microplitis demolitor (Parasitoid wasp).